A 1263-amino-acid chain; its full sequence is Topoisomerase 1-associated factor 1 (1263 aa).

Disordered regions lie at residues 1042 to 1098 (ERQL…DDSQ) and 1178 to 1263 (VEES…DEEE). A compositionally biased stretch (basic residues) spans 1060–1071 (TKGKARKKSKEK). The span at 1179–1189 (EESDNDDEVEE) shows a compositional bias: acidic residues. A compositionally biased stretch (polar residues) spans 1211-1226 (VDTQQDLSDNTSNTSD).

It belongs to the timeless family. In terms of assembly, component of the fork protection complex (FPC) consisting of TOF1 and CSM3.

The protein localises to the nucleus. Its function is as follows. Forms a fork protection complex (FPC) with CSM3 and which is required for chromosome segregation during meiosis and DNA damage repair. FPC coordinates leading and lagging strand synthesis and moves with the replication fork. FPC stabilizes replication forks in a configuration that is recognized by replication checkpoint sensors. The polypeptide is Topoisomerase 1-associated factor 1 (YBL053) (Candida albicans (strain SC5314 / ATCC MYA-2876) (Yeast)).